Reading from the N-terminus, the 523-residue chain is Probable malate:quinone oxidoreductase 1 (523 aa).

It belongs to the MQO family. FAD is required as a cofactor.

It carries out the reaction (S)-malate + a quinone = a quinol + oxaloacetate. Its pathway is carbohydrate metabolism; tricarboxylic acid cycle; oxaloacetate from (S)-malate (quinone route): step 1/1. In Pseudomonas aeruginosa (strain ATCC 15692 / DSM 22644 / CIP 104116 / JCM 14847 / LMG 12228 / 1C / PRS 101 / PAO1), this protein is Probable malate:quinone oxidoreductase 1.